The chain runs to 983 residues: MKNLFNFFKTSSELRLAYRLLKQINQKRSFYGAMTDFDLANQTNIFKKRLANGEKLKDIRVDAFAVAREATKRILGKTPYDVQILGGLILDMGSVAEMKTGEGKTIASIPPVYLNALLGQGVIVSTVNEYLAERDAEDNGKVYNFLGLTVGINKTEMDANTKRMMYNADITYSVHSELGFDYLRDNMVFSAAEKVQRGLNFCLIDEVDSILIDEAKTPLIISGGKTNLPAQYLSANQFVNTLIAEDFYIDEETKGIKLNDKGIDKANAFFGLRNLYEIQNSEIVHRIQNALRANKVMKRDVEYIVQDGKIALVDQFTGRIMAGRSYSEGLQQALQAKEGLEIEPETKTLATITYQNFFRLFKKLSGMTGTAKTEEQEFIDVYNMRVNVIPTNKPMIRKDERDEIFATSHEKNQAIISEVERVHKRGQPILIGTSQVVDSETLSEMLNQKGLYHTVLNAKQNQLEAEIIAKAGRKNAITIATNMAGRGTDIILEPGVTELGGLYILGTDKAEARRIDNQLRGRSGRQGDVGISRFFISLQDQLFRRFTNFDQIFGAYGQTNGAIKGKYIHAVLLAAQKKIEGFNFDMRKTVLSYDDVIRQQRDLIYAQRDILLQIENFDHYIQKMIIRAVDIILNYDFIILPNQEIHYKNLINFLNDNLSRITHFNFGQIGIENYPIEQLNEFLIKQLETIYFKQIQSVLKENLGKTYFESERYIILSTLDSQWQNHIDTIDKLRSSANLVQYSQKNPYQIFTEEATKKFNILVAESAYQAIVSLFNNSNAEKIEYIKAILSDGTAISYPADSPQEIIDQIIASNEERIAAARKAKEEKQPEFIEKQLAKLKIEKVESGEEFELWKIGDSKLVNLKKEMPLDEKQNILVKMQQEQLEMMSEEEKNLIQEQNLEIVEIEEIEEEIQNENPQKVEFVDFKNDPDAYNKLIFGADYADKQLISSEEEDNNEKTNINNNEDLERTKGEAQQTAKNPNE.

Residues Gln-83, Gly-101 to Thr-105, and Asp-489 each bind ATP. The tract at residues Ile-948–Glu-983 is disordered. Polar residues predominate over residues Glu-973 to Glu-983.

It belongs to the SecA family. Monomer and homodimer. Part of the essential Sec protein translocation apparatus which comprises SecA, SecYEG and auxiliary proteins SecDF. Other proteins may also be involved.

The protein resides in the cell membrane. Its subcellular location is the cytoplasm. It carries out the reaction ATP + H2O + cellular proteinSide 1 = ADP + phosphate + cellular proteinSide 2.. Functionally, part of the Sec protein translocase complex. Interacts with the SecYEG preprotein conducting channel. Has a central role in coupling the hydrolysis of ATP to the transfer of proteins into and across the cell membrane, serving as an ATP-driven molecular motor driving the stepwise translocation of polypeptide chains across the membrane. This Mesomycoplasma hyopneumoniae (strain 232) (Mycoplasma hyopneumoniae) protein is Protein translocase subunit SecA.